We begin with the raw amino-acid sequence, 438 residues long: Aspartate--tRNA(Asp/Asn) ligase (438 aa).

Position 176 (glutamate 176) interacts with L-aspartate. The interval 198-201 (QLYK) is aspartate. Arginine 220 is an L-aspartate binding site. Residues 220–222 (RAE), 228–230 (RHL), and glutamate 361 contribute to the ATP site. 2 residues coordinate Mg(2+): glutamate 361 and serine 364. Residues serine 364 and arginine 368 each coordinate L-aspartate. Residue 409–412 (GADR) participates in ATP binding.

Belongs to the class-II aminoacyl-tRNA synthetase family. Type 2 subfamily. Homodimer. It depends on Mg(2+) as a cofactor.

Its subcellular location is the cytoplasm. It catalyses the reaction tRNA(Asx) + L-aspartate + ATP = L-aspartyl-tRNA(Asx) + AMP + diphosphate. In terms of biological role, aspartyl-tRNA synthetase with relaxed tRNA specificity since it is able to aspartylate not only its cognate tRNA(Asp) but also tRNA(Asn). Reaction proceeds in two steps: L-aspartate is first activated by ATP to form Asp-AMP and then transferred to the acceptor end of tRNA(Asp/Asn). The sequence is that of Aspartate--tRNA(Asp/Asn) ligase from Methanococcus maripaludis (strain C5 / ATCC BAA-1333).